The chain runs to 202 residues: uncharacterized protein (202 aa).

The Cytoplasmic segment spans residues 1 to 6 (MITDFL). The helical; Signal-anchor for type II membrane protein transmembrane segment at 7–23 (LAFSILAVSTTLGVSNL) threads the bilayer. Residues 24-202 (NKQCRDLLQC…KNGKTRGHSG (179 aa)) lie on the Extracellular side of the membrane. The N-linked (GlcNAc...) asparagine glycan is linked to N53.

The protein localises to the membrane. This is an uncharacterized protein from Caenorhabditis elegans.